Reading from the N-terminus, the 385-residue chain is Putative nickel insertion protein (385 aa).

The protein belongs to the LarC family.

The sequence is that of Putative nickel insertion protein from Geobacter sp. (strain M21).